A 647-amino-acid polypeptide reads, in one-letter code: Macrolide export ATP-binding/permease protein MacB (647 aa).

Residues 5 to 243 (LELKGIERSY…TQTPSLTSKI (239 aa)) form the ABC transporter domain. 41–48 (GASGSGKS) serves as a coordination point for ATP. Transmembrane regions (helical) follow at residues 272 to 292 (LLTMLGIIIGIASVVTILVIG), 522 to 542 (LFLTMVAVISLIVGGIGVMNI), 576 to 596 (ILVCLVGGVLGIGLSYTIAFI), and 610 to 630 (PIALLSAFACSTAIGVIFGFL).

Belongs to the ABC transporter superfamily. Macrolide exporter (TC 3.A.1.122) family. In terms of assembly, homodimer. Part of the tripartite efflux system MacAB-TolC, which is composed of an inner membrane transporter, MacB, a periplasmic membrane fusion protein, MacA, and an outer membrane component, TolC. The complex forms a large protein conduit and can translocate molecules across both the inner and outer membranes. Interacts with MacA.

It localises to the cell inner membrane. Its function is as follows. Part of the tripartite efflux system MacAB-TolC. MacB is a non-canonical ABC transporter that contains transmembrane domains (TMD), which form a pore in the inner membrane, and an ATP-binding domain (NBD), which is responsible for energy generation. Confers resistance against macrolides. The polypeptide is Macrolide export ATP-binding/permease protein MacB (Photorhabdus laumondii subsp. laumondii (strain DSM 15139 / CIP 105565 / TT01) (Photorhabdus luminescens subsp. laumondii)).